A 350-amino-acid chain; its full sequence is tRNA N6-adenosine threonylcarbamoyltransferase (350 aa).

Fe cation contacts are provided by His-109 and His-113. Substrate is bound by residues 136–140 (TVSGG), Asp-169, Gly-182, Asp-186, and Asn-284. Asp-312 is a Fe cation binding site.

Belongs to the KAE1 / TsaD family. Fe(2+) serves as cofactor.

It localises to the cytoplasm. The catalysed reaction is L-threonylcarbamoyladenylate + adenosine(37) in tRNA = N(6)-L-threonylcarbamoyladenosine(37) in tRNA + AMP + H(+). Required for the formation of a threonylcarbamoyl group on adenosine at position 37 (t(6)A37) in tRNAs that read codons beginning with adenine. Is involved in the transfer of the threonylcarbamoyl moiety of threonylcarbamoyl-AMP (TC-AMP) to the N6 group of A37, together with TsaE and TsaB. TsaD likely plays a direct catalytic role in this reaction. The chain is tRNA N6-adenosine threonylcarbamoyltransferase from Chlorobium chlorochromatii (strain CaD3).